Here is a 600-residue protein sequence, read N- to C-terminus: MKRTNYAGDTNEQQVGQEVVLKGWVAKRRNLGGLIFIDLWDREGIVQLVFNEKENPEAFEIANAVRNQYVLEVQGKVQLRAEKEINPDMKTGKVEVAVDEVKVLAKSETTPFDITDGVDASEDLRMKYRYLDLRRPEMMRNLKLRSKVASIVHNYYDNEGFMDVETPDLTRSTPEGARDYIVPSRVYPGHFYALPQSPQLFKQLLMAAGVDKYYQLARCFRDEDLRGDRQPEFTQIDTEMSFATPEDIQTVTEGLIKRVMKEIVGVDVKTPFPRMEWQEAMDKYGSDKPDTRFGMLIHDLSDIVKDSSFKVFANTVADGNYVRAIRVPGGADKYSRKDISKYEEYIKRFGAKGLAWVKVTADGYNGPVAKFLNDQVAQINEEMDAKEGDLILFVAGSFHVVSDSLGYLRRAIAEELDMIKPDQWNYLWVVNWPMFEYDEGFGKWIAAHHPFTMLNEEDLHYLEDGEDPHKAHAQSYDIILNGNEIGGGSIRIHDPKIQEKVLKALGYTKERAEARFGFLLKALTMGMPPEGGLAFGLDRWVMLLAQADSIRDVIPFPKNSKAVEPLTAAPGKVSEQQLDDLKIEFDEKIDYKLDQDPDEQ.

Glutamate 175 lines the L-aspartate pocket. The interval 199-202 (QLFK) is aspartate. L-aspartate is bound at residue arginine 221. ATP contacts are provided by residues 221–223 (RDE) and glutamine 230. Histidine 448 contacts L-aspartate. Glutamate 484 contributes to the ATP binding site. Residue arginine 491 coordinates L-aspartate. 536–539 (GLDR) provides a ligand contact to ATP.

Belongs to the class-II aminoacyl-tRNA synthetase family. Type 1 subfamily. As to quaternary structure, homodimer.

The protein localises to the cytoplasm. It catalyses the reaction tRNA(Asp) + L-aspartate + ATP = L-aspartyl-tRNA(Asp) + AMP + diphosphate. Its function is as follows. Catalyzes the attachment of L-aspartate to tRNA(Asp) in a two-step reaction: L-aspartate is first activated by ATP to form Asp-AMP and then transferred to the acceptor end of tRNA(Asp). The polypeptide is Aspartate--tRNA ligase (Limosilactobacillus reuteri (strain DSM 20016) (Lactobacillus reuteri)).